The sequence spans 425 residues: Nuclear pore complex-interacting protein family member B6 (425 aa).

The interval 332 to 414 (SPLPPSVDDN…RRLSKLRTRH (83 aa)) is disordered. Residues 353–395 (EVEKPPKPKRWRVDEVEQSPKPKRRRVDEVEQSPKPKRQREAE) are compositionally biased toward basic and acidic residues. Residues 401 to 414 (KPKRRRLSKLRTRH) show a composition bias toward basic residues.

Belongs to the NPIP family.

The polypeptide is Nuclear pore complex-interacting protein family member B6 (NPIPB6) (Homo sapiens (Human)).